A 506-amino-acid polypeptide reads, in one-letter code: UBX domain-containing protein 4 (506 aa).

An interaction with UBQLN1 region spans residues 1–199 (MLWFQGAIPA…PAEDLTVRVE (199 aa)). Residues 1–411 (MLWFQGAIPA…VHSSSGDIWT (411 aa)) lie on the Cytoplasmic side of the membrane. The disordered stretch occupies residues 110–194 (QQMHSSKGEA…CSNQRPAEDL (85 aa)). 2 stretches are compositionally biased toward polar residues: residues 120 to 136 (SVTNDNQSESSVSTPSA) and 153 to 167 (LCETPATSDIKSDTA). The UBX domain maps to 313-391 (DRSTIARIQF…ELAPSASVVL (79 aa)). Residues 412-432 (LLGTVLYPFLAIWRLISNFLF) lie within the membrane without spanning it. Over 433–506 (SNPPPAQTSA…TWNGNSTQQM (74 aa)) the chain is Cytoplasmic. Positions 437 to 506 (PAQTSARATS…TWNGNSTQQM (70 aa)) are disordered. Residues 444–456 (ATSTEPSNSASSS) show a composition bias toward low complexity. Positions 457–489 (KSEKREPVRKRMLEKRGEDFKKEGKIYRLRTQD) are enriched in basic and acidic residues. Threonine 487 carries the phosphothreonine modification. A compositionally biased stretch (polar residues) spans 496 to 506 (NTWNGNSTQQM).

As to quaternary structure, directly interacts with VCP. Interacts with UBQLN1. Forms a complex with VCP and UBQLN1. In terms of tissue distribution, expressed in many tissues, including brain, heart, kidney, liver, muscle and spleen (at protein level).

It is found in the endoplasmic reticulum membrane. It localises to the nucleus envelope. Functionally, involved in endoplasmic reticulum-associated protein degradation (ERAD). Acts as a platform to recruit both UBQLN1 and VCP to the ER during ERAD. In Mus musculus (Mouse), this protein is UBX domain-containing protein 4 (Ubxn4).